A 431-amino-acid polypeptide reads, in one-letter code: GTPase Obg (431 aa).

The 158-residue stretch at Met-1–Leu-158 folds into the Obg domain. The tract at residues Gly-125 to Pro-145 is disordered. The OBG-type G domain occupies Ala-159 to Ala-335. GTP contacts are provided by residues Gly-165–Ser-172, Phe-190–Val-194, Asp-212–Gly-215, Asn-282–Asp-285, and Ser-316–Leu-318. Mg(2+) contacts are provided by Ser-172 and Thr-192. Positions Tyr-353–Ala-431 constitute an OCT domain.

Belongs to the TRAFAC class OBG-HflX-like GTPase superfamily. OBG GTPase family. Monomer. Mg(2+) is required as a cofactor.

The protein localises to the cytoplasm. In terms of biological role, an essential GTPase which binds GTP, GDP and possibly (p)ppGpp with moderate affinity, with high nucleotide exchange rates and a fairly low GTP hydrolysis rate. Plays a role in control of the cell cycle, stress response, ribosome biogenesis and in those bacteria that undergo differentiation, in morphogenesis control. The polypeptide is GTPase Obg (Levilactobacillus brevis (strain ATCC 367 / BCRC 12310 / CIP 105137 / JCM 1170 / LMG 11437 / NCIMB 947 / NCTC 947) (Lactobacillus brevis)).